A 130-amino-acid polypeptide reads, in one-letter code: MSMQDPIADMLTRIRNGQAANKVAISMPSSKLKVAIANVLAEEGYIESVKVLDGVKPELEITLKYFQGKPVVESIQRVSRPGLRIYKRKDELPKVMGGLGVAVVSTSKGVMTDRAARQAGLGGEIICYVA.

It belongs to the universal ribosomal protein uS8 family. Part of the 30S ribosomal subunit. Contacts proteins S5 and S12.

Functionally, one of the primary rRNA binding proteins, it binds directly to 16S rRNA central domain where it helps coordinate assembly of the platform of the 30S subunit. This Pasteurella multocida (strain Pm70) protein is Small ribosomal subunit protein uS8.